A 106-amino-acid polypeptide reads, in one-letter code: Large ribosomal subunit protein uL23 (106 aa).

It belongs to the universal ribosomal protein uL23 family. As to quaternary structure, part of the 50S ribosomal subunit. Contacts protein L29, and trigger factor when it is bound to the ribosome.

One of the early assembly proteins it binds 23S rRNA. One of the proteins that surrounds the polypeptide exit tunnel on the outside of the ribosome. Forms the main docking site for trigger factor binding to the ribosome. The sequence is that of Large ribosomal subunit protein uL23 from Neisseria gonorrhoeae (strain ATCC 700825 / FA 1090).